The chain runs to 261 residues: Cytochrome c oxidase subunit 3 (261 aa).

At 1-15 (MTHQTHAYHMVNPSP) the chain is on the mitochondrial matrix side. The chain crosses the membrane as a helical span at residues 16 to 34 (WPLTGALSALLMTSGLIMW). Over 35 to 40 (FHFNST) the chain is Mitochondrial intermembrane. Residues 41–66 (ILLMLGLTTNMLTMYQWWRDIIREST) traverse the membrane as a helical segment. The Mitochondrial matrix portion of the chain corresponds to 67–72 (FQGHHT). The helical transmembrane segment at 73 to 105 (PTVQKGLRYGMILFIISEVLFFTGFFWAFYHSS) threads the bilayer. Topologically, residues 106-128 (LAPTPELGGCWPPTGIHPLNPLE) are mitochondrial intermembrane. Residues 129-152 (VPLLNTSVLLASGVSITWAHHSLM) form a helical membrane-spanning segment. At 153–155 (EGN) the chain is on the mitochondrial matrix side. Residues 156–183 (RNHMLQALFITIALGVYFTLLQASEYYE) traverse the membrane as a helical segment. At 184–190 (APFTISD) the chain is on the mitochondrial intermembrane side. The helical transmembrane segment at 191 to 223 (GVYGSTFFVATGFHGLHVIIGSTFLIVCFFRQL) threads the bilayer. The Mitochondrial matrix segment spans residues 224-232 (KFHFTSSHH). The helical transmembrane segment at 233 to 256 (FGFEAAAWYWHFVDVVWLFLYVSI) threads the bilayer. Residues 257-261 (YWWGS) lie on the Mitochondrial intermembrane side of the membrane.

The protein belongs to the cytochrome c oxidase subunit 3 family. As to quaternary structure, component of the cytochrome c oxidase (complex IV, CIV), a multisubunit enzyme composed of 14 subunits. The complex is composed of a catalytic core of 3 subunits MT-CO1, MT-CO2 and MT-CO3, encoded in the mitochondrial DNA, and 11 supernumerary subunits COX4I, COX5A, COX5B, COX6A, COX6B, COX6C, COX7A, COX7B, COX7C, COX8 and NDUFA4, which are encoded in the nuclear genome. The complex exists as a monomer or a dimer and forms supercomplexes (SCs) in the inner mitochondrial membrane with NADH-ubiquinone oxidoreductase (complex I, CI) and ubiquinol-cytochrome c oxidoreductase (cytochrome b-c1 complex, complex III, CIII), resulting in different assemblies (supercomplex SCI(1)III(2)IV(1) and megacomplex MCI(2)III(2)IV(2)).

It is found in the mitochondrion inner membrane. The enzyme catalyses 4 Fe(II)-[cytochrome c] + O2 + 8 H(+)(in) = 4 Fe(III)-[cytochrome c] + 2 H2O + 4 H(+)(out). Its function is as follows. Component of the cytochrome c oxidase, the last enzyme in the mitochondrial electron transport chain which drives oxidative phosphorylation. The respiratory chain contains 3 multisubunit complexes succinate dehydrogenase (complex II, CII), ubiquinol-cytochrome c oxidoreductase (cytochrome b-c1 complex, complex III, CIII) and cytochrome c oxidase (complex IV, CIV), that cooperate to transfer electrons derived from NADH and succinate to molecular oxygen, creating an electrochemical gradient over the inner membrane that drives transmembrane transport and the ATP synthase. Cytochrome c oxidase is the component of the respiratory chain that catalyzes the reduction of oxygen to water. Electrons originating from reduced cytochrome c in the intermembrane space (IMS) are transferred via the dinuclear copper A center (CU(A)) of subunit 2 and heme A of subunit 1 to the active site in subunit 1, a binuclear center (BNC) formed by heme A3 and copper B (CU(B)). The BNC reduces molecular oxygen to 2 water molecules using 4 electrons from cytochrome c in the IMS and 4 protons from the mitochondrial matrix. In Aepyceros melampus (Impala), this protein is Cytochrome c oxidase subunit 3 (MT-CO3).